The sequence spans 90 residues: Small ribosomal subunit protein bS16 (90 aa).

Belongs to the bacterial ribosomal protein bS16 family.

The protein is Small ribosomal subunit protein bS16 of Lactobacillus gasseri (strain ATCC 33323 / DSM 20243 / BCRC 14619 / CIP 102991 / JCM 1131 / KCTC 3163 / NCIMB 11718 / NCTC 13722 / AM63).